The following is a 346-amino-acid chain: MSTPTTPLSYKDAGVDIDAGNALVNNIKSAVKRTRRPEVMGNLGGFGALCELPTKYKHPVLVSGTDGVGTKLRLAIDYKKHDNVGVDLVAMCSNDLIVSGAEPLFFLDYYATGKLDVEVATAVVKGIAEGCVQSGCALIGGETAEMPGMYEGDDYDLAGFCVGVVEKEEIIDGTKVQDGDALIALASSGPHSNGFSLIRKVLEVSKADPAQELAGKPLIDHLLEPTKIYVKSLLKLLEQHDVHAMSHITGGGFWENIPRVLPEDCKAVVKSDSWQWPVVFNWLMENGNISEFEMYRTFNCGVGMVVALPADKVDSALELLTAEGENAWLIGNIAKRNGEEEQVEIL.

The protein belongs to the AIR synthase family.

Its subcellular location is the cytoplasm. It catalyses the reaction 2-formamido-N(1)-(5-O-phospho-beta-D-ribosyl)acetamidine + ATP = 5-amino-1-(5-phospho-beta-D-ribosyl)imidazole + ADP + phosphate + H(+). Its pathway is purine metabolism; IMP biosynthesis via de novo pathway; 5-amino-1-(5-phospho-D-ribosyl)imidazole from N(2)-formyl-N(1)-(5-phospho-D-ribosyl)glycinamide: step 2/2. In Shewanella pealeana (strain ATCC 700345 / ANG-SQ1), this protein is Phosphoribosylformylglycinamidine cyclo-ligase.